Reading from the N-terminus, the 229-residue chain is Ribonuclease 3 (229 aa).

Residues 4–133 (WEELQESVGF…FIGALYLDNG (130 aa)) enclose the RNase III domain. Residue Glu-46 participates in Mg(2+) binding. The active site involves Asp-50. Asp-119 and Glu-122 together coordinate Mg(2+). Residue Glu-122 is part of the active site. One can recognise a DRBM domain in the interval 159–228 (DYKTQLQEIV…AQFAINQLTH (70 aa)).

Belongs to the ribonuclease III family. In terms of assembly, homodimer. Mg(2+) is required as a cofactor.

It localises to the cytoplasm. The catalysed reaction is Endonucleolytic cleavage to 5'-phosphomonoester.. In terms of biological role, digests double-stranded RNA. Involved in the processing of primary rRNA transcript to yield the immediate precursors to the large and small rRNAs (23S and 16S). Processes some mRNAs, and tRNAs when they are encoded in the rRNA operon. Processes pre-crRNA and tracrRNA of type II CRISPR loci if present in the organism. The sequence is that of Ribonuclease 3 from Listeria monocytogenes serotype 4a (strain HCC23).